Here is a 459-residue protein sequence, read N- to C-terminus: Cysteine--tRNA ligase (459 aa).

Cys27 contacts Zn(2+). The short motif at 29-39 is the 'HIGH' region element; sequence VTVYDDCHIGH. 3 residues coordinate Zn(2+): Cys208, His233, and Glu237. Residues 265–269 carry the 'KMSKS' region motif; the sequence is KMSKS. Residue Lys268 coordinates ATP.

The protein belongs to the class-I aminoacyl-tRNA synthetase family. In terms of assembly, monomer. The cofactor is Zn(2+).

It localises to the cytoplasm. The enzyme catalyses tRNA(Cys) + L-cysteine + ATP = L-cysteinyl-tRNA(Cys) + AMP + diphosphate. This chain is Cysteine--tRNA ligase, found in Francisella tularensis subsp. novicida (strain U112).